Consider the following 522-residue polypeptide: GMP synthase [glutamine-hydrolyzing] (522 aa).

One can recognise a Glutamine amidotransferase type-1 domain in the interval 9 to 204 (KILILDFGAQ…VVDICGCQTL (196 aa)). Residue cysteine 86 is the Nucleophile of the active site. Catalysis depends on residues histidine 178 and glutamate 180. The GMPS ATP-PPase domain occupies 205 to 397 (WTSANIIEDQ…LGLPHAMVYR (193 aa)). 232–238 (SGGVDSS) serves as a coordination point for ATP.

As to quaternary structure, homodimer.

The enzyme catalyses XMP + L-glutamine + ATP + H2O = GMP + L-glutamate + AMP + diphosphate + 2 H(+). It functions in the pathway purine metabolism; GMP biosynthesis; GMP from XMP (L-Gln route): step 1/1. Catalyzes the synthesis of GMP from XMP. In Xylella fastidiosa (strain M23), this protein is GMP synthase [glutamine-hydrolyzing].